The following is a 205-amino-acid chain: Holliday junction branch migration complex subunit RuvA (205 aa).

The domain I stretch occupies residues 1–64; it reads MIGRLSGILV…EDAQLLYGFI (64 aa). The tract at residues 65–143 is domain II; it reads TKQERALFRL…SLLEASAGSE (79 aa). The flexible linker stretch occupies residues 144-156; sequence REFMLQSNYTPAA. The domain III stretch occupies residues 157-205; sequence AVDSAEEDAISALLSLGYKPAQASKSVSAAFKEGMSSETLIKAALKSML.

Belongs to the RuvA family. In terms of assembly, homotetramer. Forms an RuvA(8)-RuvB(12)-Holliday junction (HJ) complex. HJ DNA is sandwiched between 2 RuvA tetramers; dsDNA enters through RuvA and exits via RuvB. An RuvB hexamer assembles on each DNA strand where it exits the tetramer. Each RuvB hexamer is contacted by two RuvA subunits (via domain III) on 2 adjacent RuvB subunits; this complex drives branch migration. In the full resolvosome a probable DNA-RuvA(4)-RuvB(12)-RuvC(2) complex forms which resolves the HJ.

Its subcellular location is the cytoplasm. In terms of biological role, the RuvA-RuvB-RuvC complex processes Holliday junction (HJ) DNA during genetic recombination and DNA repair, while the RuvA-RuvB complex plays an important role in the rescue of blocked DNA replication forks via replication fork reversal (RFR). RuvA specifically binds to HJ cruciform DNA, conferring on it an open structure. The RuvB hexamer acts as an ATP-dependent pump, pulling dsDNA into and through the RuvAB complex. HJ branch migration allows RuvC to scan DNA until it finds its consensus sequence, where it cleaves and resolves the cruciform DNA. The chain is Holliday junction branch migration complex subunit RuvA from Shewanella frigidimarina (strain NCIMB 400).